The following is a 223-amino-acid chain: Killer cell lectin-like receptor subfamily B member 1B allele B (223 aa).

Topologically, residues 1-45 (MDTAVVYADLHLARTGEPKHKSPPSLSPDTCQCPRWHRLALKLGC) are cytoplasmic. The short motif at 5-10 (VVYADL) is the ITIM motif element. The LCK-binding motif signature appears at 31 to 34 (CQCP). Residues 46–66 (ACLILLVLSVIGLGVLVLTLL) form a helical; Signal-anchor for type II membrane protein membrane-spanning segment. Residues 67–223 (QKPLIQNSPA…LKCECMCNGS (157 aa)) lie on the Extracellular side of the membrane. Residues 101 to 211 (HQDKCFHVSQ…CDSDNLWICQ (111 aa)) enclose the C-type lectin domain. Disulfide bonds link cysteine 122–cysteine 210 and cysteine 189–cysteine 202.

In terms of assembly, homodimer; disulfide-linked. Interacts with tyrosine kinase LCK. Binds PTPN6/SHP-1 in a phosphorylation-dependent manner. In terms of tissue distribution, expressed in a subset of natural killer cells.

The protein resides in the membrane. In terms of biological role, receptor for CLEC2D/OCIL. Ligand-binding contributes to inhibition of cytotoxic natural killer (NK) cells. May mediate MHC class I-independent 'missing-self' recognition of allografts, tumor cells and virus-infected cells. This Rattus norvegicus (Rat) protein is Killer cell lectin-like receptor subfamily B member 1B allele B.